The chain runs to 79 residues: Conotoxin MIVA (79 aa).

The signal sequence occupies residues 1-21 (MGMRMMFTVFLLVVLATTVVS). Residues 22 to 38 (IPSDRASDGRNAVVHER) constitute a propeptide that is removed on maturation. Pro-40 is subject to 4-hydroxyproline. At Glu-41 the chain carries 4-carboxyglutamate. 2 O-linked (HexNAc...) threonine glycosylation sites follow: Thr-45 and Thr-47. 6 positions are modified to 4-hydroxyproline: Pro-55, Pro-60, Pro-61, Pro-69, Pro-70, and Pro-74. Residue Pro-74 is modified to Proline amide. A propeptide spanning residues 75 to 79 (GRRND) is cleaved from the precursor.

Post-translationally, O-linked glycan consists of Hex4-HexNAc2 hexasaccharide. Contains 3 disulfide bonds. In terms of tissue distribution, expressed by the venom duct.

The protein resides in the secreted. Its function is as follows. Probable neurotoxin with ion channel inhibitor activity. In Conus magus (Magical cone), this protein is Conotoxin MIVA.